The primary structure comprises 154 residues: Proline dehydrogenase transcriptional activator (154 aa).

The 62-residue stretch at 5–66 folds into the HTH asnC-type domain; the sequence is IDATDRRILH…MLSPIRLGLI (62 aa). The segment at residues 24–43 is a DNA-binding region (H-T-H motif); sequence VTELARKVGLSKTPVAARIR.

Its function is as follows. Transcriptional activator of the putA gene in response to proline. The polypeptide is Proline dehydrogenase transcriptional activator (putR) (Rhodobacter capsulatus (Rhodopseudomonas capsulata)).